The primary structure comprises 322 residues: Cytochrome c biogenesis protein CcsA (322 aa).

The next 8 helical transmembrane spans lie at 17 to 37 (VVSI…IVGL), 44 to 64 (GMIA…IYLG), 71 to 91 (LYES…VPYF), 98 to 118 (LSAL…SGLL), 143 to 163 (MVLG…LLVI), 225 to 245 (VISL…VWAN), 258 to 273 (ETWA…IYLH), and 286 to 306 (AIVA…VNLL).

Belongs to the CcmF/CycK/Ccl1/NrfE/CcsA family. May interact with Ccs1.

The protein resides in the plastid. Its subcellular location is the chloroplast thylakoid membrane. Functionally, required during biogenesis of c-type cytochromes (cytochrome c6 and cytochrome f) at the step of heme attachment. In Vitis vinifera (Grape), this protein is Cytochrome c biogenesis protein CcsA.